Consider the following 257-residue polypeptide: Protein LigF (257 aa).

The GST N-terminal domain maps to 1 to 82; it reads MTLKLYSFGP…YLEDVFPESG (82 aa). Residues 89–257 form the GST C-terminal domain; the sequence is DPFKRAEMRV…LLKRQNEKVA (169 aa).

Belongs to the GST superfamily.

Functionally, lignin degradation enzyme. This chain is Protein LigF (ligF), found in Sphingobium sp. (strain NBRC 103272 / SYK-6).